We begin with the raw amino-acid sequence, 183 residues long: ATP synthase subunit delta (183 aa).

This sequence belongs to the ATPase delta chain family. In terms of assembly, F-type ATPases have 2 components, F(1) - the catalytic core - and F(0) - the membrane proton channel. F(1) has five subunits: alpha(3), beta(3), gamma(1), delta(1), epsilon(1). F(0) has three main subunits: a(1), b(2) and c(10-14). The alpha and beta chains form an alternating ring which encloses part of the gamma chain. F(1) is attached to F(0) by a central stalk formed by the gamma and epsilon chains, while a peripheral stalk is formed by the delta and b chains.

Its subcellular location is the cell inner membrane. In terms of biological role, f(1)F(0) ATP synthase produces ATP from ADP in the presence of a proton or sodium gradient. F-type ATPases consist of two structural domains, F(1) containing the extramembraneous catalytic core and F(0) containing the membrane proton channel, linked together by a central stalk and a peripheral stalk. During catalysis, ATP synthesis in the catalytic domain of F(1) is coupled via a rotary mechanism of the central stalk subunits to proton translocation. Its function is as follows. This protein is part of the stalk that links CF(0) to CF(1). It either transmits conformational changes from CF(0) to CF(1) or is implicated in proton conduction. The polypeptide is ATP synthase subunit delta (Rickettsia typhi (strain ATCC VR-144 / Wilmington)).